A 501-amino-acid polypeptide reads, in one-letter code: Aspartate--tRNA ligase, cytoplasmic (501 aa).

Thr-52 bears the Phosphothreonine mark. Lys-74 is modified (N6-acetyllysine). Glu-229 contacts L-aspartate. Ser-249 carries the post-translational modification Phosphoserine. The segment at 251–254 is aspartate; it reads QLYK. Arg-273 serves as a coordination point for L-aspartate. Residues 273–275 and 281–283 contribute to the ATP site; these read RAE and RHL. Lys-374 carries the N6-acetyllysine modification. The tract at residues 411 to 415 is binding site for the 3'-end of tRNA; sequence KQSNS. Glu-424 contributes to the ATP binding site. Residues Ser-427 and Arg-431 each coordinate L-aspartate. 472–475 lines the ATP pocket; that stretch reads GLER. Phosphothreonine; by PKA is present on Thr-500.

Belongs to the class-II aminoacyl-tRNA synthetase family. Type 2 subfamily. As to quaternary structure, homodimer. Part of a multisubunit complex that groups tRNA ligases for Arg (RARS1), Asp (DARS1), Gln (QARS1), Ile (IARS1), Leu (LARS1), Lys (KARS1), Met (MARS1) the bifunctional ligase for Glu and Pro (EPRS1) and the auxiliary subunits AIMP1/p43, AIMP2/p38 and EEF1E1/p18.

The protein localises to the cytoplasm. It carries out the reaction tRNA(Asp) + L-aspartate + ATP = L-aspartyl-tRNA(Asp) + AMP + diphosphate. Catalyzes the specific attachment of an amino acid to its cognate tRNA in a 2 step reaction: the amino acid (AA) is first activated by ATP to form AA-AMP and then transferred to the acceptor end of the tRNA. This is Aspartate--tRNA ligase, cytoplasmic (DARS1) from Pongo abelii (Sumatran orangutan).